Reading from the N-terminus, the 362-residue chain is UDP-N-acetylglucosamine--N-acetylmuramyl-(pentapeptide) pyrophosphoryl-undecaprenol N-acetylglucosamine transferase (362 aa).

Residues 15-17, asparagine 127, arginine 165, serine 191, isoleucine 247, 266-271, and glutamine 292 each bind UDP-N-acetyl-alpha-D-glucosamine; these read TGG and ALTVSE.

This sequence belongs to the glycosyltransferase 28 family. MurG subfamily.

It localises to the cell inner membrane. It carries out the reaction di-trans,octa-cis-undecaprenyl diphospho-N-acetyl-alpha-D-muramoyl-L-alanyl-D-glutamyl-meso-2,6-diaminopimeloyl-D-alanyl-D-alanine + UDP-N-acetyl-alpha-D-glucosamine = di-trans,octa-cis-undecaprenyl diphospho-[N-acetyl-alpha-D-glucosaminyl-(1-&gt;4)]-N-acetyl-alpha-D-muramoyl-L-alanyl-D-glutamyl-meso-2,6-diaminopimeloyl-D-alanyl-D-alanine + UDP + H(+). Its pathway is cell wall biogenesis; peptidoglycan biosynthesis. In terms of biological role, cell wall formation. Catalyzes the transfer of a GlcNAc subunit on undecaprenyl-pyrophosphoryl-MurNAc-pentapeptide (lipid intermediate I) to form undecaprenyl-pyrophosphoryl-MurNAc-(pentapeptide)GlcNAc (lipid intermediate II). The protein is UDP-N-acetylglucosamine--N-acetylmuramyl-(pentapeptide) pyrophosphoryl-undecaprenol N-acetylglucosamine transferase of Shewanella baltica (strain OS185).